The primary structure comprises 82 residues: Musculoskeletal embryonic nuclear protein 1 (82 aa).

The segment at 1 to 34 (MSQAGAQEAPIKKKRPPVKEEDLKGARGNLTKNQ) is disordered. At Ser-2 the chain carries Phosphoserine. Residues 10 to 18 (PIKKKRPPV) carry the Nuclear localization signal motif.

The protein belongs to the MUSTN1 family.

It localises to the nucleus. Its subcellular location is the cytoplasm. The protein resides in the secreted. It is found in the extracellular space. In terms of biological role, required for chondrocyte development and proliferation. Plays a role in myoblast differentiation and fusion. Modulates skeletal muscle extracellular matrix composition. Plays a role in skeletal muscle function. Plays a role in glucose homeostasis. The chain is Musculoskeletal embryonic nuclear protein 1 (MUSTN1) from Bos taurus (Bovine).